Reading from the N-terminus, the 297-residue chain is Probable porphobilinogen deaminase (297 aa).

Cysteine 233 bears the S-(dipyrrolylmethanemethyl)cysteine mark.

This sequence belongs to the HMBS family. Requires dipyrromethane as cofactor.

The enzyme catalyses 4 porphobilinogen + H2O = hydroxymethylbilane + 4 NH4(+). It participates in porphyrin-containing compound metabolism; protoporphyrin-IX biosynthesis; coproporphyrinogen-III from 5-aminolevulinate: step 2/4. Its function is as follows. Tetrapolymerization of the monopyrrole PBG into the hydroxymethylbilane pre-uroporphyrinogen in several discrete steps. This is Probable porphobilinogen deaminase from Thermoplasma volcanium (strain ATCC 51530 / DSM 4299 / JCM 9571 / NBRC 15438 / GSS1).